Reading from the N-terminus, the 577-residue chain is Multidrug transporter TPO1_2 (577 aa).

The tract at residues 1–63 (MSSTSSDRPY…ALSKNSTQTS (63 aa)) is disordered. N-linked (GlcNAc...) asparagine glycans are attached at residues N44 and N58. 12 helical membrane passes run 137-157 (VMLC…SSIF), 167-187 (IYHV…LGFA), 204-224 (GVLV…ATAK), 234-254 (FFAG…FADM), 263-283 (AICL…VIGS), 293-313 (WLEY…LFFF), 368-388 (PLLL…YLLL), 406-426 (ELPY…IWWM), 446-466 (LLPM…FCWT), 475-495 (WIVP…IFLP), 504-526 (YLLI…GAAF), and 541-561 (YAGL…LLFL).

Belongs to the major facilitator superfamily. DHA1 family. Polyamines/proton antiporter (TC 2.A.1.2.16) subfamily.

The protein resides in the cell membrane. Functionally, multidrug resistance transporter involved in resistance to azole antifungal drugs such as the imidazoles miconazole, ketoconazole, and tioconazole; as well as the triazoles itraconazole and fluconazole. Also plays a role in the resistance to other antifungal drug families such as the polyene amphotericin B, the pyrimide analog flucytosine, the fungicide mancozeb, and the polyamine spermine. Decreases the intracellular accumulation of clotrimazole by mediating its extrusion from cells. Plays a role in biofilm formation. The chain is Multidrug transporter TPO1_2 from Candida glabrata (strain ATCC 2001 / BCRC 20586 / JCM 3761 / NBRC 0622 / NRRL Y-65 / CBS 138) (Yeast).